We begin with the raw amino-acid sequence, 554 residues long: Glucose-6-phosphate isomerase (554 aa).

E359 (proton donor) is an active-site residue. Active-site residues include H390 and K518.

It belongs to the GPI family.

It is found in the cytoplasm. It carries out the reaction alpha-D-glucose 6-phosphate = beta-D-fructose 6-phosphate. It participates in carbohydrate biosynthesis; gluconeogenesis. The protein operates within carbohydrate degradation; glycolysis; D-glyceraldehyde 3-phosphate and glycerone phosphate from D-glucose: step 2/4. In terms of biological role, catalyzes the reversible isomerization of glucose-6-phosphate to fructose-6-phosphate. This is Glucose-6-phosphate isomerase from Pseudomonas fluorescens.